Here is a 154-residue protein sequence, read N- to C-terminus: Fluoride-specific ion channel FluC 1 (154 aa).

Helical transmembrane passes span 28-48, 59-79, 91-111, and 124-144; these read VVAV…AASL, WTTF…MVVI, PFFG…AVDS, and LAYL…AAWA. The Na(+) site is built by G99 and T102.

The protein belongs to the fluoride channel Fluc/FEX (TC 1.A.43) family.

It localises to the cell membrane. It catalyses the reaction fluoride(in) = fluoride(out). Na(+) is not transported, but it plays an essential structural role and its presence is essential for fluoride channel function. In terms of biological role, fluoride-specific ion channel. Important for reducing fluoride concentration in the cell, thus reducing its toxicity. This Streptomyces coelicolor (strain ATCC BAA-471 / A3(2) / M145) protein is Fluoride-specific ion channel FluC 1.